A 238-amino-acid chain; its full sequence is Large ribosomal subunit protein uL1 (238 aa).

This sequence belongs to the universal ribosomal protein uL1 family. Part of the 50S ribosomal subunit.

Binds directly to 23S rRNA. The L1 stalk is quite mobile in the ribosome, and is involved in E site tRNA release. In terms of biological role, protein L1 is also a translational repressor protein, it controls the translation of the L11 operon by binding to its mRNA. This chain is Large ribosomal subunit protein uL1, found in Rippkaea orientalis (strain PCC 8801 / RF-1) (Cyanothece sp. (strain PCC 8801)).